A 440-amino-acid chain; its full sequence is C4-dicarboxylate transport protein (440 aa).

Helical transmembrane passes span 8 to 28, 40 to 60, 74 to 94, 147 to 167, 187 to 207, 221 to 241, 288 to 308, and 354 to 374; these read LYLQ…LFPA, FIKL…VTGI, LKGL…GLVV, GDIL…AALK, IVGF…AFTV, LIAC…GLVL, VVGL…SIYL, and AATL…LLGV. The segment at 419–440 is disordered; the sequence is EEVEPANEPEPPAIPAGAGLHG.

Belongs to the dicarboxylate/amino acid:cation symporter (DAACS) (TC 2.A.23) family.

The protein localises to the cell inner membrane. Its function is as follows. Responsible for the transport of dicarboxylates such as succinate, fumarate, and malate from the periplasm across the membrane. The chain is C4-dicarboxylate transport protein from Anaeromyxobacter sp. (strain K).